The following is a 405-amino-acid chain: Secreted aspartic protease FUS4 (405 aa).

The N-terminal stretch at 1–24 (MLAIATLHVALQVFGAFSLSHAAA) is a signal peptide. The region spanning 49–400 (YLFNVTVGSP…NFEERSFGLA (352 aa)) is the Peptidase A1 domain. 4 N-linked (GlcNAc...) asparagine glycosylation sites follow: Asn52, Asn61, Asn107, and Asn123. An intrachain disulfide couples Cys318 to Cys356.

It belongs to the peptidase A1 family.

It is found in the secreted. In terms of biological role, secreted aspartic protease; part of the gene cluster that mediates the biosynthesis of the mycotoxin fusarin C. Within the cluster, FUS1, FUS2, FUS8 and FUS9 are sufficient for fusarin production. The other FUS cluster members are not essential for fusarin C biosynthesis. The protein is Secreted aspartic protease FUS4 of Gibberella fujikuroi (strain CBS 195.34 / IMI 58289 / NRRL A-6831) (Bakanae and foot rot disease fungus).